Consider the following 286-residue polypeptide: MISKEYISLLSALLTKGYSKVAVYSYSYSYSNYSSVSYITFNFPTGIMMVAKEGGIVQATSLASIQSLIESGGELSITYLATFTTSFSANEIDMYAVIGTTMLYKIASVTGSFTSSSDDNLSVEWTIDVVVGNIFNVSSGSSGVTAYSLPTGQCTSLSGQLIMYPYLVHLLIAYTLIPSTSFTVQSKYPNLPLATMLATVPTPTSPTQLQGITSFMYACGNTPVLCYPVYNDVGTAIITSSVNCTSLTIVALYQIGSTYLAYMQSPANVTLNVGNAYSYEFGVVIS.

A signal peptide spans 1–19 (MISKEYISLLSALLTKGYS).

This is an uncharacterized protein from Acidianus filamentous virus 2 (isolate Italy/Pozzuoli) (AFV-2).